The chain runs to 489 residues: Adenosylhomocysteinase (489 aa).

3 residues coordinate substrate: Thr-68, Asp-151, and Glu-213. 214 to 216 is a binding site for NAD(+); that stretch reads TTT. Residues Lys-243 and Asp-247 each contribute to the substrate site. Residues Asn-248, 277–282, Glu-300, Asn-335, 356–358, and Asn-403 contribute to the NAD(+) site; these read GYGDVG and IGH.

The protein belongs to the adenosylhomocysteinase family. NAD(+) serves as cofactor.

It localises to the cytoplasm. It catalyses the reaction S-adenosyl-L-homocysteine + H2O = L-homocysteine + adenosine. It participates in amino-acid biosynthesis; L-homocysteine biosynthesis; L-homocysteine from S-adenosyl-L-homocysteine: step 1/1. May play a key role in the regulation of the intracellular concentration of adenosylhomocysteine. The polypeptide is Adenosylhomocysteinase (Mycobacterium sp. (strain JLS)).